Here is a 284-residue protein sequence, read N- to C-terminus: Agamous-like MADS-box protein AGL49 (284 aa).

The segment at 1-20 (MAPRQKKPNKSDDDDGDLHR) is disordered. In terms of domain architecture, MADS-box spans 21-66 (KKQSFFKQRFPGFKKKASELSVLCGNSVGFICYGPDNDLHVWPQSQ).

Interacts with MEE14/CBP1.

It localises to the nucleus. In terms of biological role, probable transcription factor that may function in the maintenance of the proper function of the central cell in pollen tube attraction. The polypeptide is Agamous-like MADS-box protein AGL49 (Arabidopsis thaliana (Mouse-ear cress)).